Reading from the N-terminus, the 249-residue chain is 2,3-bisphosphoglycerate-dependent phosphoglycerate mutase (249 aa).

Substrate is bound by residues 9–16, 22–23, arginine 61, 88–91, lysine 99, 115–116, and 184–185; these read RHGQSQWN, TG, ERHY, RR, and GN. The Tele-phosphohistidine intermediate role is filled by histidine 10. The active-site Proton donor/acceptor is glutamate 88.

This sequence belongs to the phosphoglycerate mutase family. BPG-dependent PGAM subfamily. As to quaternary structure, homodimer.

It carries out the reaction (2R)-2-phosphoglycerate = (2R)-3-phosphoglycerate. Its pathway is carbohydrate degradation; glycolysis; pyruvate from D-glyceraldehyde 3-phosphate: step 3/5. Functionally, catalyzes the interconversion of 2-phosphoglycerate and 3-phosphoglycerate. This chain is 2,3-bisphosphoglycerate-dependent phosphoglycerate mutase, found in Xanthomonas euvesicatoria pv. vesicatoria (strain 85-10) (Xanthomonas campestris pv. vesicatoria).